A 320-amino-acid chain; its full sequence is Pseudouridine-5'-phosphate glycosidase (320 aa).

Catalysis depends on Glu-25, which acts as the Proton donor. Substrate contacts are provided by Lys-85 and Val-105. Asp-137 lines the Mn(2+) pocket. 139-141 (SAD) contributes to the substrate binding site. Lys-158 (nucleophile) is an active-site residue.

It belongs to the pseudouridine-5'-phosphate glycosidase family. As to quaternary structure, homotrimer. It depends on Mn(2+) as a cofactor.

It carries out the reaction D-ribose 5-phosphate + uracil = psi-UMP + H2O. Catalyzes the reversible cleavage of pseudouridine 5'-phosphate (PsiMP) to ribose 5-phosphate and uracil. Functions biologically in the cleavage direction, as part of a pseudouridine degradation pathway. The sequence is that of Pseudouridine-5'-phosphate glycosidase from Rhodospirillum centenum (strain ATCC 51521 / SW).